The following is a 530-amino-acid chain: Bifunctional purine biosynthesis protein PurH (530 aa).

The 148-residue stretch at 1–148 (MNNARPIHRA…KNHKDVAIVV (148 aa)) folds into the MGS-like domain.

It belongs to the PurH family.

The enzyme catalyses (6R)-10-formyltetrahydrofolate + 5-amino-1-(5-phospho-beta-D-ribosyl)imidazole-4-carboxamide = 5-formamido-1-(5-phospho-D-ribosyl)imidazole-4-carboxamide + (6S)-5,6,7,8-tetrahydrofolate. It catalyses the reaction IMP + H2O = 5-formamido-1-(5-phospho-D-ribosyl)imidazole-4-carboxamide. It participates in purine metabolism; IMP biosynthesis via de novo pathway; 5-formamido-1-(5-phospho-D-ribosyl)imidazole-4-carboxamide from 5-amino-1-(5-phospho-D-ribosyl)imidazole-4-carboxamide (10-formyl THF route): step 1/1. Its pathway is purine metabolism; IMP biosynthesis via de novo pathway; IMP from 5-formamido-1-(5-phospho-D-ribosyl)imidazole-4-carboxamide: step 1/1. The polypeptide is Bifunctional purine biosynthesis protein PurH (Vibrio cholerae serotype O1 (strain M66-2)).